We begin with the raw amino-acid sequence, 165 residues long: MNSLENLILVGVIKSCHGIKGHVMLKSFTDPATKILERNLVNESGANIHIKLISQNAKGELICTFNDIATRNEAEHLKGYKIFCLRASLPELEEDEFYIADLTHLPVLNQDHKEIGKIKNILNFGAGDIIEIEFSDQTTELLPFNKEFFPIITKDYVILNYQREA.

The region spanning 94 to 165 (EDEFYIADLT…YVILNYQREA (72 aa)) is the PRC barrel domain.

The protein belongs to the RimM family. As to quaternary structure, binds ribosomal protein uS19.

The protein localises to the cytoplasm. An accessory protein needed during the final step in the assembly of 30S ribosomal subunit, possibly for assembly of the head region. Essential for efficient processing of 16S rRNA. May be needed both before and after RbfA during the maturation of 16S rRNA. It has affinity for free ribosomal 30S subunits but not for 70S ribosomes. The chain is Ribosome maturation factor RimM from Rickettsia rickettsii (strain Sheila Smith).